A 193-amino-acid chain; its full sequence is Cysteine and glycine-rich protein 1 (193 aa).

In terms of domain architecture, LIM zinc-binding 1 spans 10-61 (CGVCQKTVYFAEEVQCEGNSFHKSCFLCMVCKKNLDSTTVAVHGEEIYCKSC). The Nuclear localization signal signature appears at 64 to 69 (KKYGPK). Ser-81 carries the phosphoserine modification. N6-acetyllysine is present on Lys-84. Lys-91 is covalently cross-linked (Glycyl lysine isopeptide (Lys-Gly) (interchain with G-Cter in SUMO2)). N6-acetyllysine is present on residues Lys-112, Lys-131, Lys-137, and Lys-161. The 52-residue stretch at 119–170 (CPRCSQAVYAAEKVIGAGKSWHKSCFRCAKCGKGLESTTLADKDGEIYCKGC) folds into the LIM zinc-binding 2 domain. A Phosphoserine modification is found at Ser-192.

In terms of assembly, interacts with ASCC1; ASCC2 and TRIP4.

Its subcellular location is the nucleus. Its function is as follows. Could play a role in neuronal development. The protein is Cysteine and glycine-rich protein 1 (Csrp1) of Rattus norvegicus (Rat).